We begin with the raw amino-acid sequence, 91 residues long: Long neurotoxin LNTX28 (91 aa).

A signal peptide spans 1–21 (MKTLLLTLVVMTIVCLDLGYT). 5 disulfides stabilise this stretch: cysteine 24–cysteine 41, cysteine 34–cysteine 62, cysteine 47–cysteine 51, cysteine 66–cysteine 77, and cysteine 78–cysteine 83.

This sequence belongs to the three-finger toxin family. Long-chain subfamily. Type II alpha-neurotoxin sub-subfamily. Expressed by the venom gland.

It localises to the secreted. Its function is as follows. Binds with high affinity to muscular (alpha-1/CHRNA1) and neuronal (alpha-7/CHRNA7) nicotinic acetylcholine receptor (nAChR) and inhibits acetylcholine from binding to the receptor, thereby impairing neuromuscular and neuronal transmission. This is Long neurotoxin LNTX28 from Ophiophagus hannah (King cobra).